Consider the following 163-residue polypeptide: ATP synthase subunit b (163 aa).

A helical membrane pass occupies residues 10–29 (VFMQMFHFLLMLVVLRLFAY).

The protein belongs to the ATPase B chain family. In terms of assembly, F-type ATPases have 2 components, F(1) - the catalytic core - and F(0) - the membrane proton channel. F(1) has five subunits: alpha(3), beta(3), gamma(1), delta(1), epsilon(1). F(0) has three main subunits: a(1), b(2) and c(10-14). The alpha and beta chains form an alternating ring which encloses part of the gamma chain. F(1) is attached to F(0) by a central stalk formed by the gamma and epsilon chains, while a peripheral stalk is formed by the delta and b chains.

Its subcellular location is the cell membrane. In terms of biological role, f(1)F(0) ATP synthase produces ATP from ADP in the presence of a proton or sodium gradient. F-type ATPases consist of two structural domains, F(1) containing the extramembraneous catalytic core and F(0) containing the membrane proton channel, linked together by a central stalk and a peripheral stalk. During catalysis, ATP synthesis in the catalytic domain of F(1) is coupled via a rotary mechanism of the central stalk subunits to proton translocation. Component of the F(0) channel, it forms part of the peripheral stalk, linking F(1) to F(0). The chain is ATP synthase subunit b from Desulforudis audaxviator (strain MP104C).